The primary structure comprises 520 residues: Cyclin-L2 (520 aa).

Cyclin-like stretches follow at residues 81 to 183 (ELIQ…RVLK) and 196 to 280 (KIIV…KILQ). Residues 309–520 (RAKGLLPPGS…DHPGHSRHRR (212 aa)) form a disordered region. Phosphoserine is present on residues serine 330, serine 337, serine 347, and serine 350. Residues 356–366 (RKMEGPKKAKG) are compositionally biased toward basic and acidic residues. Position 368 is a phosphoserine (serine 368). The RS stretch occupies residues 384–422 (RSREQSYSRSPSRSASPKRRKSDSGSTSGGSKSQSRSRS). Over residues 407 to 429 (SGSTSGGSKSQSRSRSRSDSPPR) the composition is skewed to low complexity. Residues 440–453 (SEVRGSRKSKDCKH) are compositionally biased toward basic and acidic residues. The span at 454-471 (LTQKPHKSRSRSSSRSRS) shows a compositional bias: basic residues. 2 stretches are compositionally biased toward basic and acidic residues: residues 472–481 (RSRERTDSSG) and 489–514 (YYRD…DHPG).

It belongs to the cyclin family. Cyclin L subfamily. Interacts with CDK11A, CDK11B, CDK12, CDK13 and POLR2A, the hyperphosphorylated C-terminal domain (CTD) of RNA polymerase II. May form a ternary complex with CDK11B and casein kinase II (CKII). Interacts with pre-mRNA-splicing factors, including at least SRSF1, SRSF2 and SRSF7/SLU7.

It localises to the nucleus speckle. It is found in the nucleus. Its subcellular location is the nucleoplasm. Involved in pre-mRNA splicing. May induce cell death, possibly by acting on the transcription and RNA processing of apoptosis-related factors. In Rattus norvegicus (Rat), this protein is Cyclin-L2 (Ccnl2).